The chain runs to 128 residues: Photosystem II reaction center Psb28 protein (128 aa).

The disordered stretch occupies residues Ser109–Gly128. Over residues Leu111–Gly128 the composition is skewed to polar residues.

It belongs to the Psb28 family. Part of the photosystem II complex.

The protein localises to the cellular thylakoid membrane. The chain is Photosystem II reaction center Psb28 protein from Synechococcus sp. (strain CC9311).